A 293-amino-acid chain; its full sequence is 4-hydroxy-tetrahydrodipicolinate synthase (293 aa).

A pyruvate-binding site is contributed by Thr47. The active-site Proton donor/acceptor is Tyr135. Lys163 serves as the catalytic Schiff-base intermediate with substrate. Val205 contacts pyruvate.

It belongs to the DapA family. Homotetramer; dimer of dimers.

It localises to the cytoplasm. The enzyme catalyses L-aspartate 4-semialdehyde + pyruvate = (2S,4S)-4-hydroxy-2,3,4,5-tetrahydrodipicolinate + H2O + H(+). It participates in amino-acid biosynthesis; L-lysine biosynthesis via DAP pathway; (S)-tetrahydrodipicolinate from L-aspartate: step 3/4. Functionally, catalyzes the condensation of (S)-aspartate-beta-semialdehyde [(S)-ASA] and pyruvate to 4-hydroxy-tetrahydrodipicolinate (HTPA). The protein is 4-hydroxy-tetrahydrodipicolinate synthase of Leptothrix cholodnii (strain ATCC 51168 / LMG 8142 / SP-6) (Leptothrix discophora (strain SP-6)).